Consider the following 68-residue polypeptide: MSISARNQLKGKVVAVKKGLVTAEVVLEIAGGDKVTSIISLDSIEDLGVKEGTELTAVIKSTDVMILA.

The Mop domain occupies Ser-2 to Ala-68.

In terms of biological role, binds one mole of molybdenum per mole of protein and contains a pterin. This is Molybdenum-pterin-binding protein 3 (mopIII) from Clostridium pasteurianum.